Here is a 53-residue protein sequence, read N- to C-terminus: Lectin alpha chain (53 aa).

Belongs to the leguminous lectin family. As to quaternary structure, tetramer of two alpha and two beta chains.

The chain is Lectin alpha chain from Lathyrus clymenum (Spanish vetchling).